A 113-amino-acid chain; its full sequence is Small ribosomal subunit protein uS17 (113 aa).

It belongs to the universal ribosomal protein uS17 family. As to quaternary structure, part of the 30S ribosomal subunit.

Functionally, one of the primary rRNA binding proteins, it binds specifically to the 5'-end of 16S ribosomal RNA. The polypeptide is Small ribosomal subunit protein uS17 (Nanoarchaeum equitans (strain Kin4-M)).